The sequence spans 123 residues: UPF0102 protein Psyr_4114 (123 aa).

Belongs to the UPF0102 family.

The polypeptide is UPF0102 protein Psyr_4114 (Pseudomonas syringae pv. syringae (strain B728a)).